Here is a 70-residue protein sequence, read N- to C-terminus: Guanine nucleotide-binding protein G(I)/G(S)/G(O) subunit gamma-8 (70 aa).

Cysteine methyl ester is present on Cys67. Residue Cys67 is the site of S-geranylgeranyl cysteine attachment. Positions Val68–Leu70 are cleaved as a propeptide — removed in mature form.

Belongs to the G protein gamma family. In terms of assembly, g proteins are composed of 3 units, alpha, beta and gamma.

It is found in the cell membrane. Functionally, guanine nucleotide-binding proteins (G proteins) are involved as a modulator or transducer in various transmembrane signaling systems. The beta and gamma chains are required for the GTPase activity, for replacement of GDP by GTP, and for G protein-effector interaction. The chain is Guanine nucleotide-binding protein G(I)/G(S)/G(O) subunit gamma-8 (GNG8) from Homo sapiens (Human).